A 275-amino-acid polypeptide reads, in one-letter code: 4-hydroxy-tetrahydrodipicolinate reductase (275 aa).

NAD(+) contacts are provided by residues glycine 13–methionine 18 and glycine 108–threonine 110. Histidine 164 acts as the Proton donor/acceptor in catalysis. (S)-2,3,4,5-tetrahydrodipicolinate is bound at residue histidine 165. The active-site Proton donor is lysine 168. Position 174–175 (glycine 174–threonine 175) interacts with (S)-2,3,4,5-tetrahydrodipicolinate.

Belongs to the DapB family.

The protein resides in the cytoplasm. The catalysed reaction is (S)-2,3,4,5-tetrahydrodipicolinate + NAD(+) + H2O = (2S,4S)-4-hydroxy-2,3,4,5-tetrahydrodipicolinate + NADH + H(+). It carries out the reaction (S)-2,3,4,5-tetrahydrodipicolinate + NADP(+) + H2O = (2S,4S)-4-hydroxy-2,3,4,5-tetrahydrodipicolinate + NADPH + H(+). It participates in amino-acid biosynthesis; L-lysine biosynthesis via DAP pathway; (S)-tetrahydrodipicolinate from L-aspartate: step 4/4. Catalyzes the conversion of 4-hydroxy-tetrahydrodipicolinate (HTPA) to tetrahydrodipicolinate. The protein is 4-hydroxy-tetrahydrodipicolinate reductase of Acaryochloris marina (strain MBIC 11017).